The chain runs to 276 residues: Putative pyruvate, phosphate dikinase regulatory protein (276 aa).

Gly-153 to Thr-160 contacts ADP.

This sequence belongs to the pyruvate, phosphate/water dikinase regulatory protein family. PDRP subfamily.

It carries out the reaction N(tele)-phospho-L-histidyl/L-threonyl-[pyruvate, phosphate dikinase] + ADP = N(tele)-phospho-L-histidyl/O-phospho-L-threonyl-[pyruvate, phosphate dikinase] + AMP + H(+). The catalysed reaction is N(tele)-phospho-L-histidyl/O-phospho-L-threonyl-[pyruvate, phosphate dikinase] + phosphate + H(+) = N(tele)-phospho-L-histidyl/L-threonyl-[pyruvate, phosphate dikinase] + diphosphate. In terms of biological role, bifunctional serine/threonine kinase and phosphorylase involved in the regulation of the pyruvate, phosphate dikinase (PPDK) by catalyzing its phosphorylation/dephosphorylation. This Brucella anthropi (strain ATCC 49188 / DSM 6882 / CCUG 24695 / JCM 21032 / LMG 3331 / NBRC 15819 / NCTC 12168 / Alc 37) (Ochrobactrum anthropi) protein is Putative pyruvate, phosphate dikinase regulatory protein.